The primary structure comprises 498 residues: Lysine--tRNA ligase (498 aa).

Residues E407 and E414 each contribute to the Mg(2+) site.

This sequence belongs to the class-II aminoacyl-tRNA synthetase family. As to quaternary structure, homodimer. Mg(2+) is required as a cofactor.

The protein resides in the cytoplasm. It catalyses the reaction tRNA(Lys) + L-lysine + ATP = L-lysyl-tRNA(Lys) + AMP + diphosphate. The sequence is that of Lysine--tRNA ligase (lysS) from Rhizobium meliloti (strain 1021) (Ensifer meliloti).